A 598-amino-acid polypeptide reads, in one-letter code: Aspartate--tRNA(Asp/Asn) ligase (598 aa).

Position 170 (E170) interacts with L-aspartate. The aspartate stretch occupies residues 194 to 197 (QLFK). Residue R216 participates in L-aspartate binding. Residues 216–218 (RDE) and Q225 each bind ATP. H448 contributes to the L-aspartate binding site. E482 provides a ligand contact to ATP. R489 contributes to the L-aspartate binding site. 534 to 537 (GWDR) serves as a coordination point for ATP. A disordered region spans residues 558 to 598 (GGGVDPLTDAPAPITPQQRKESGIDAKPREDKPKEDAKSKA). Basic and acidic residues predominate over residues 575 to 598 (QRKESGIDAKPREDKPKEDAKSKA).

Belongs to the class-II aminoacyl-tRNA synthetase family. Type 1 subfamily. Homodimer.

Its subcellular location is the cytoplasm. It carries out the reaction tRNA(Asx) + L-aspartate + ATP = L-aspartyl-tRNA(Asx) + AMP + diphosphate. In terms of biological role, aspartyl-tRNA synthetase with relaxed tRNA specificity since it is able to aspartylate not only its cognate tRNA(Asp) but also tRNA(Asn). Reaction proceeds in two steps: L-aspartate is first activated by ATP to form Asp-AMP and then transferred to the acceptor end of tRNA(Asp/Asn). The polypeptide is Aspartate--tRNA(Asp/Asn) ligase (Mycolicibacterium smegmatis (strain ATCC 700084 / mc(2)155) (Mycobacterium smegmatis)).